Consider the following 161-residue polypeptide: Ribonuclease P protein component 2 (161 aa).

Belongs to the eukaryotic/archaeal RNase P protein component 2 family. As to quaternary structure, consists of a catalytic RNA component and at least 4-5 protein subunits.

It localises to the cytoplasm. The enzyme catalyses Endonucleolytic cleavage of RNA, removing 5'-extranucleotides from tRNA precursor.. Its function is as follows. Part of ribonuclease P, a protein complex that generates mature tRNA molecules by cleaving their 5'-ends. This is Ribonuclease P protein component 2 from Methanopyrus kandleri (strain AV19 / DSM 6324 / JCM 9639 / NBRC 100938).